The primary structure comprises 421 residues: MAKRTLGLAKAAKAKKQKKEQEHQEISASPDEESSSSNQLTIELPEEIDANNEISQLKGLHKTYLQSERDNELLVNGIIHECDRLLRENDSENKQPLPAVFHAIYAIALAELSKFHTEELDKVKEFFIAALERVELGLEKNPNDINLLVAKTKILLDQISLQYIAPLTLESDVKELDKEIDELLDAALSVYESVEARAKELKDYSIFDDSETLDILEALDDILDIVDNFGKENQGDDGSDEDDDEDDDEEEKSVELAETHPLYKIKNSDKYDQWWRDHTHLYLDNLEKLENGSPELKREVCHRLGQSYLQESEVPYSVFTTLKYDDEYDGIEELEGLTEKEAQKISQELITKALDYLKQAKDEEDPETWVSIAEAMISLGNLYEVDSKEQEDLYLEAEKILKRANNVTNGKFQEELDNLLP.

2 disordered regions span residues 1–41 and 230–259; these read MAKR…NQLT and GKEN…LAET. The span at 235-252 shows a compositional bias: acidic residues; it reads GDDGSDEDDDEDDDEEEK.

This sequence belongs to the ETT1 family.

It is found in the nucleus. Its function is as follows. Required for correct translation termination and probably involved in regulation of hypoxic gene expression. This is Enhancer of translation termination 1 (ETT1) from Candida albicans (strain WO-1) (Yeast).